Here is a 291-residue protein sequence, read N- to C-terminus: Ribosomal RNA small subunit methyltransferase H (291 aa).

S-adenosyl-L-methionine is bound by residues 25-27, Asp45, Phe73, Asp88, and Gln95; that span reads GGH.

Belongs to the methyltransferase superfamily. RsmH family.

It localises to the cytoplasm. It carries out the reaction cytidine(1402) in 16S rRNA + S-adenosyl-L-methionine = N(4)-methylcytidine(1402) in 16S rRNA + S-adenosyl-L-homocysteine + H(+). Specifically methylates the N4 position of cytidine in position 1402 (C1402) of 16S rRNA. The protein is Ribosomal RNA small subunit methyltransferase H of Flavobacterium psychrophilum (strain ATCC 49511 / DSM 21280 / CIP 103535 / JIP02/86).